We begin with the raw amino-acid sequence, 242 residues long: ATP synthase subunit a (242 aa).

A run of 6 helical transmembrane segments spans residues 29–49 (SSIYMLLASILALTYFYLAFY), 84–104 (FIPLVFSLFIFILFCNLLGMT), 114–134 (IIVTFTLAILVFLTVTIVGFV), 140–160 (FLTLFLPHGTPLWLAPLMIVI), 189–209 (VIAGFTVSLMIYLKFLPIPLM), and 210–230 (VILIGFEIFVAILQAYIFTIL).

The protein belongs to the ATPase A chain family. As to quaternary structure, F-type ATPases have 2 components, CF(1) - the catalytic core - and CF(0) - the membrane proton channel. CF(1) has five subunits: alpha(3), beta(3), gamma(1), delta(1), epsilon(1). CF(0) has three main subunits: a(1), b(2) and c(9-12). The alpha and beta chains form an alternating ring which encloses part of the gamma chain. CF(1) is attached to CF(0) by a central stalk formed by the gamma and epsilon chains, while a peripheral stalk is formed by the delta and b chains.

The protein localises to the cell inner membrane. Its function is as follows. Key component of the proton channel; it plays a direct role in the translocation of protons across the membrane. The chain is ATP synthase subunit a from Rickettsia felis (strain ATCC VR-1525 / URRWXCal2) (Rickettsia azadi).